The sequence spans 518 residues: Arrestin-related trafficking adapter 10 (518 aa).

K118 is covalently cross-linked (Glycyl lysine isopeptide (Lys-Gly) (interchain with G-Cter in ubiquitin)).

This sequence belongs to the ART10 family. Interacts with RSP5. Post-translationally, ubiquitinated by RSP5.

It is found in the cytoplasm. May regulate endocytosis by recruiting RSP5 ubiquitin ligase activity to specific plasma membrane proteins in response to extracellular stimuli. The sequence is that of Arrestin-related trafficking adapter 10 (ART10) from Saccharomyces cerevisiae (strain Lalvin EC1118 / Prise de mousse) (Baker's yeast).